The following is a 330-amino-acid chain: Aspartate--ammonia ligase (330 aa).

The protein belongs to the class-II aminoacyl-tRNA synthetase family. AsnA subfamily.

The protein localises to the cytoplasm. The enzyme catalyses L-aspartate + NH4(+) + ATP = L-asparagine + AMP + diphosphate + H(+). It functions in the pathway amino-acid biosynthesis; L-asparagine biosynthesis; L-asparagine from L-aspartate (ammonia route): step 1/1. This is Aspartate--ammonia ligase from Histophilus somni (strain 2336) (Haemophilus somnus).